A 517-amino-acid chain; its full sequence is BTB/POZ domain-containing protein At3g49900 (517 aa).

A compositionally biased stretch (low complexity) spans 28 to 37 (SSSSSSLSLS). Residues 28–49 (SSSSSSLSLSPKQPINLSSSPS) form a disordered region. Polar residues predominate over residues 38–49 (PKQPINLSSSPS). In terms of domain architecture, BTB spans 67 to 130 (PDVFVNVGGT…CYGAHIELTP (64 aa)). The region spanning 224–307 (LPAGDFNVVA…VRAMLQEQLN (84 aa)) is the NPH3 domain. The segment at 409–456 (ARSASFHCVHQPSNVNKTQRGDRGSVSNLSTTYRRRRASPPQAQPQKS) is disordered.

This sequence belongs to the NPH3 family.

It functions in the pathway protein modification; protein ubiquitination. May act as a substrate-specific adapter of an E3 ubiquitin-protein ligase complex (CUL3-RBX1-BTB) which mediates the ubiquitination and subsequent proteasomal degradation of target proteins. The polypeptide is BTB/POZ domain-containing protein At3g49900 (Arabidopsis thaliana (Mouse-ear cress)).